The chain runs to 328 residues: Tetraacyldisaccharide 4'-kinase (328 aa).

55 to 62 (TAGGNGKT) is a binding site for ATP.

This sequence belongs to the LpxK family.

The enzyme catalyses a lipid A disaccharide + ATP = a lipid IVA + ADP + H(+). It participates in glycolipid biosynthesis; lipid IV(A) biosynthesis; lipid IV(A) from (3R)-3-hydroxytetradecanoyl-[acyl-carrier-protein] and UDP-N-acetyl-alpha-D-glucosamine: step 6/6. Its function is as follows. Transfers the gamma-phosphate of ATP to the 4'-position of a tetraacyldisaccharide 1-phosphate intermediate (termed DS-1-P) to form tetraacyldisaccharide 1,4'-bis-phosphate (lipid IVA). This chain is Tetraacyldisaccharide 4'-kinase, found in Shigella dysenteriae serotype 1 (strain Sd197).